The sequence spans 208 residues: uncharacterized protein (208 aa).

This is an uncharacterized protein from Bacillus subtilis (strain 168).